The chain runs to 202 residues: uncharacterized protein (202 aa).

The region spanning 116-196 (LDLHGMTCSE…GKGTTWVLLK (81 aa)) is the Smr domain.

This is an uncharacterized protein from Treponema pallidum (strain Nichols).